The sequence spans 498 residues: COP9 signalosome complex subunit 1 (498 aa).

The PCI domain maps to 249 to 430 (SYLEAANSFI…HVLVSTQGDK (182 aa)).

The protein belongs to the CSN1 family. Component of the COP9 signalosome (CSN) complex.

It localises to the cytoplasm. The protein resides in the nucleus. In terms of biological role, component of the COP9 signalosome (CSN) complex that acts as an regulator of the ubiquitin (Ubl) conjugation pathway by mediating the deneddylation of the cullin subunit of SCF-type E3 ubiquitin-protein ligase complexes. The CSN complex seems to link protein degradation to sexual development. Required for fruit body formation. The protein is COP9 signalosome complex subunit 1 (csnA) of Emericella nidulans (strain FGSC A4 / ATCC 38163 / CBS 112.46 / NRRL 194 / M139) (Aspergillus nidulans).